The chain runs to 263 residues: Kallikrein 1-related peptidase b24 (263 aa).

An N-terminal signal peptide occupies residues 1–17 (MWFLILFLALSLGGIDA). The propeptide at 18–24 (APPVQSR) is activation peptide. The Peptidase S1 domain occupies 25-260 (VVGGFKCEKN…FASWIKDTMA (236 aa)). 5 disulfides stabilise this stretch: Cys31–Cys175, Cys50–Cys66, Cys154–Cys221, Cys186–Cys200, and Cys211–Cys236. Catalysis depends on His65, which acts as the Charge relay system. N-linked (GlcNAc...) asparagine glycosylation is found at Asn69 and Asn105. The active-site Charge relay system is Asp122. An N-linked (GlcNAc...) asparagine glycan is attached at Asn185. Ser215 functions as the Charge relay system in the catalytic mechanism.

It belongs to the peptidase S1 family. Kallikrein subfamily.

The enzyme catalyses Preferential cleavage of Arg-|-Xaa bonds in small molecule substrates. Highly selective action to release kallidin (lysyl-bradykinin) from kininogen involves hydrolysis of Met-|-Xaa or Leu-|-Xaa.. Glandular kallikreins cleave Met-Lys and Arg-Ser bonds in kininogen to release Lys-bradykinin. In Mus musculus (Mouse), this protein is Kallikrein 1-related peptidase b24 (Klk1b24).